Reading from the N-terminus, the 1571-residue chain is Pentafunctional AROM polypeptide 2 (1571 aa).

Positions 1-380 (MAEPTKISIL…YEPKASVVSN (380 aa)) are 3-dehydroquinate synthase. NAD(+) is bound by residues 44–46 (DTN), 81–84 (ENSK), 112–114 (GGV), and D117. A 7-phospho-2-dehydro-3-deoxy-D-arabino-heptonate-binding site is contributed by R128. Residue 137–138 (TT) participates in NAD(+) binding. 7-phospho-2-dehydro-3-deoxy-D-arabino-heptonate contacts are provided by D144 and K150. Position 159 (K159) interacts with NAD(+). N160 contributes to the 7-phospho-2-dehydro-3-deoxy-D-arabino-heptonate binding site. Residues 177–180 (FIDT) and N188 contribute to the NAD(+) site. E192 contacts Zn(2+). 7-phospho-2-dehydro-3-deoxy-D-arabino-heptonate contacts are provided by residues 192-195 (EVIK) and K246. The active-site Proton acceptor; for 3-dehydroquinate synthase activity is E256. Residues 260-264 (RNLLN) and H267 contribute to the 7-phospho-2-dehydro-3-deoxy-D-arabino-heptonate site. H267 serves as a coordination point for Zn(2+). Catalysis depends on H271, which acts as the Proton acceptor; for 3-dehydroquinate synthase activity. Residues H283 and K352 each coordinate 7-phospho-2-dehydro-3-deoxy-D-arabino-heptonate. Residue H283 participates in Zn(2+) binding. The EPSP synthase stretch occupies residues 393–838 (VIPGVPKNLN…WDALKQKFGV (446 aa)). C820 serves as the catalytic For EPSP synthase activity. Positions 859-1051 (NASIIIIGMR…RKKHLSFFVS (193 aa)) are shikimate kinase. 866–873 (GMRGAGKT) lines the ATP pocket. Residues 1052–1273 (LTLPDLRESG…AAPGQLSAAE (222 aa)) are 3-dehydroquinase. H1175 serves as the catalytic Proton acceptor; for 3-dehydroquinate dehydratase activity. The active-site Schiff-base intermediate with substrate; for 3-dehydroquinate dehydratase activity is the K1203. Residues 1286–1571 (AKKFAVLGKP…NAVLGTNETK (286 aa)) are shikimate dehydrogenase.

It in the N-terminal section; belongs to the sugar phosphate cyclases superfamily. Dehydroquinate synthase family. The protein in the 2nd section; belongs to the EPSP synthase family. This sequence in the 3rd section; belongs to the shikimate kinase family. In the 4th section; belongs to the type-I 3-dehydroquinase family. It in the C-terminal section; belongs to the shikimate dehydrogenase family. In terms of assembly, homodimer. It depends on Zn(2+) as a cofactor.

The protein resides in the cytoplasm. The enzyme catalyses 7-phospho-2-dehydro-3-deoxy-D-arabino-heptonate = 3-dehydroquinate + phosphate. The catalysed reaction is 3-dehydroquinate = 3-dehydroshikimate + H2O. It carries out the reaction shikimate + NADP(+) = 3-dehydroshikimate + NADPH + H(+). It catalyses the reaction shikimate + ATP = 3-phosphoshikimate + ADP + H(+). The enzyme catalyses 3-phosphoshikimate + phosphoenolpyruvate = 5-O-(1-carboxyvinyl)-3-phosphoshikimate + phosphate. Its pathway is metabolic intermediate biosynthesis; chorismate biosynthesis; chorismate from D-erythrose 4-phosphate and phosphoenolpyruvate: step 2/7. The protein operates within metabolic intermediate biosynthesis; chorismate biosynthesis; chorismate from D-erythrose 4-phosphate and phosphoenolpyruvate: step 3/7. It participates in metabolic intermediate biosynthesis; chorismate biosynthesis; chorismate from D-erythrose 4-phosphate and phosphoenolpyruvate: step 4/7. It functions in the pathway metabolic intermediate biosynthesis; chorismate biosynthesis; chorismate from D-erythrose 4-phosphate and phosphoenolpyruvate: step 5/7. Its pathway is metabolic intermediate biosynthesis; chorismate biosynthesis; chorismate from D-erythrose 4-phosphate and phosphoenolpyruvate: step 6/7. Functionally, the AROM polypeptide catalyzes 5 consecutive enzymatic reactions in prechorismate polyaromatic amino acid biosynthesis. This chain is Pentafunctional AROM polypeptide 2, found in Talaromyces marneffei (strain ATCC 18224 / CBS 334.59 / QM 7333) (Penicillium marneffei).